The primary structure comprises 74 residues: Bacteriocin hiracin-JM79 (74 aa).

A signal peptide spans Met1–Ala30.

It is found in the secreted. In terms of biological role, bacteriocin with antibacterial activity against the Gram-positive Listeria, Enterococcus, Propionibacterium, Staphylococcus and some strains of Clostridium, Lactobacillus and Pediococcus. Lacks antibacterial activity against Gram-negative bacteria. This is Bacteriocin hiracin-JM79 from Enterococcus hirae.